Here is a 365-residue protein sequence, read N- to C-terminus: MGVVSFSSTSSGASTATTESGGAVRMSPEPVVAVAAAAQQLPVVKGVDSADEVVTSRPAAAAAQQSSRYKGVVPQPNGRWGAQIYERHARVWLGTFPDEEAAARAYDVAALRYRGRDAATNFPGAAASAAELAFLAAHSKAEIVDMLRKHTYADELRQGLRRGRGMGARAQPTPSWAREPLFEKAVTPSDVGKLNRLVVPKQHAEKHFPLRRAASSDSASAAATGKGVLLNFEDGEGKVWRFRYSYWNSSQSYVLTKGWSRFVREKGLRAGDTIVFSRSAYGPDKLLFIDCKKNNAAAATTTCAGDERPTTSGAEPRVVRLFGVDIAGGDCRKRERAVEMGQEVFLLKRQCVVHQRTPALGALLL.

A disordered region spans residues 1 to 24 (MGVVSFSSTSSGASTATTESGGAV). Positions 68 to 123 (RYKGVVPQPNGRWGAQIYERHARVWLGTFPDEEAAARAYDVAALRYRGRDAATNFP) form a DNA-binding region, AP2/ERF. Residues 182–294 (FEKAVTPSDV…KLLFIDCKKN (113 aa)) constitute a DNA-binding region (TF-B3).

The protein resides in the nucleus. This Oryza sativa subsp. japonica (Rice) protein is AP2/ERF and B3 domain-containing protein Os01g0141000.